The following is a 29-amino-acid chain: Vodo peptide N (29 aa).

A cross-link (cyclopeptide (Gly-Asn)) is located at residues 1–29 (GLPVCGETCTLGKCYTAGCSCSWPVCYRN). Cystine bridges form between Cys-5-Cys-19, Cys-9-Cys-21, and Cys-14-Cys-26.

Post-translationally, this is a cyclic peptide.

Functionally, probably participates in a plant defense mechanism. This is Vodo peptide N from Viola odorata (Sweet violet).